A 361-amino-acid polypeptide reads, in one-letter code: S-adenosylmethionine:tRNA ribosyltransferase-isomerase (361 aa).

This sequence belongs to the QueA family. Monomer.

It is found in the cytoplasm. The catalysed reaction is 7-aminomethyl-7-carbaguanosine(34) in tRNA + S-adenosyl-L-methionine = epoxyqueuosine(34) in tRNA + adenine + L-methionine + 2 H(+). It functions in the pathway tRNA modification; tRNA-queuosine biosynthesis. Functionally, transfers and isomerizes the ribose moiety from AdoMet to the 7-aminomethyl group of 7-deazaguanine (preQ1-tRNA) to give epoxyqueuosine (oQ-tRNA). The protein is S-adenosylmethionine:tRNA ribosyltransferase-isomerase of Mesorhizobium japonicum (strain LMG 29417 / CECT 9101 / MAFF 303099) (Mesorhizobium loti (strain MAFF 303099)).